The sequence spans 350 residues: Phosphotriesterase-related protein (350 aa).

Positions 22, 24, 169, 201, 230, and 298 each coordinate a divalent metal cation.

This sequence belongs to the metallo-dependent hydrolases superfamily. Phosphotriesterase family. The cofactor is a divalent metal cation.

This Drosophila mojavensis (Fruit fly) protein is Phosphotriesterase-related protein.